Consider the following 105-residue polypeptide: Large ribosomal subunit protein eL36 (105 aa).

The interval M1–K20 is disordered.

Belongs to the eukaryotic ribosomal protein eL36 family.

In Trichoderma hamatum, this protein is Large ribosomal subunit protein eL36 (rpl36).